Reading from the N-terminus, the 355-residue chain is Protein RecA (355 aa).

Residue 78 to 85 (GPESSGKT) participates in ATP binding.

The protein belongs to the RecA family.

Its subcellular location is the cytoplasm. Can catalyze the hydrolysis of ATP in the presence of single-stranded DNA, the ATP-dependent uptake of single-stranded DNA by duplex DNA, and the ATP-dependent hybridization of homologous single-stranded DNAs. It interacts with LexA causing its activation and leading to its autocatalytic cleavage. The chain is Protein RecA from Rhodobacter capsulatus (Rhodopseudomonas capsulata).